We begin with the raw amino-acid sequence, 582 residues long: Phosphoglucomutase, cytoplasmic (582 aa).

Alpha-D-glucose 1,6-bisphosphate is bound by residues Arg25 and Ser124. Ser124 (phosphoserine intermediate) is an active-site residue. Mg(2+)-binding residues include Ser124, Asp300, Asp302, and Asp304. A Phosphoserine modification is found at Ser124. Residues Asp304, Arg305, Thr368, Glu387, Ser389, and Lys400 each coordinate alpha-D-glucose 1,6-bisphosphate.

Belongs to the phosphohexose mutase family. As to quaternary structure, monomer. Mg(2+) serves as cofactor.

The protein resides in the cytoplasm. It catalyses the reaction alpha-D-glucose 1-phosphate = alpha-D-glucose 6-phosphate. It carries out the reaction O-phospho-L-seryl-[protein] + alpha-D-glucose 1-phosphate = alpha-D-glucose 1,6-bisphosphate + L-seryl-[protein]. The catalysed reaction is alpha-D-glucose 1,6-bisphosphate + L-seryl-[protein] = O-phospho-L-seryl-[protein] + alpha-D-glucose 6-phosphate. In terms of biological role, catalyzes the reversible isomerization of alpha-D-glucose 1-phosphate to alpha-D-glucose 6-phosphate. The mechanism proceeds via the intermediate compound alpha-D-glucose 1,6-bisphosphate. This enzyme participates in both the breakdown and synthesis of glucose. This Pisum sativum (Garden pea) protein is Phosphoglucomutase, cytoplasmic (PGM1).